Consider the following 273-residue polypeptide: Large ribosomal subunit protein uL2 (273 aa).

A disordered region spans residues 228-273 (VDHPHGGGEGKTSGGRHPVTPWGFSTKGKKTRKNKRTSKFIVKKRK). Residues 254–273 (KGKKTRKNKRTSKFIVKKRK) show a composition bias toward basic residues.

Belongs to the universal ribosomal protein uL2 family. Part of the 50S ribosomal subunit. Forms a bridge to the 30S subunit in the 70S ribosome.

One of the primary rRNA binding proteins. Required for association of the 30S and 50S subunits to form the 70S ribosome, for tRNA binding and peptide bond formation. It has been suggested to have peptidyltransferase activity; this is somewhat controversial. Makes several contacts with the 16S rRNA in the 70S ribosome. This Rickettsia prowazekii (strain Madrid E) protein is Large ribosomal subunit protein uL2.